Consider the following 339-residue polypeptide: Endospore coat-associated protein YutH (339 aa).

It belongs to the CotS family.

It is found in the forespore outer membrane. The protein resides in the spore coat. Involved in sporulation. This chain is Endospore coat-associated protein YutH (yutH), found in Bacillus subtilis (strain 168).